Consider the following 392-residue polypeptide: Tryptophan synthase beta chain (392 aa).

Position 84 is an N6-(pyridoxal phosphate)lysine (Lys-84).

It belongs to the TrpB family. In terms of assembly, tetramer of two alpha and two beta chains. Pyridoxal 5'-phosphate serves as cofactor.

The catalysed reaction is (1S,2R)-1-C-(indol-3-yl)glycerol 3-phosphate + L-serine = D-glyceraldehyde 3-phosphate + L-tryptophan + H2O. It participates in amino-acid biosynthesis; L-tryptophan biosynthesis; L-tryptophan from chorismate: step 5/5. Its function is as follows. The beta subunit is responsible for the synthesis of L-tryptophan from indole and L-serine. This is Tryptophan synthase beta chain from Campylobacter jejuni subsp. doylei (strain ATCC BAA-1458 / RM4099 / 269.97).